The primary structure comprises 255 residues: Triosephosphate isomerase (255 aa).

9-11 contacts substrate; sequence NWK. His95 acts as the Electrophile in catalysis. The Proton acceptor role is filled by Glu167. Substrate is bound by residues Gly173, Ser212, and 233 to 234; that span reads GG.

The protein belongs to the triosephosphate isomerase family. Homodimer.

The protein localises to the cytoplasm. It carries out the reaction D-glyceraldehyde 3-phosphate = dihydroxyacetone phosphate. It functions in the pathway carbohydrate biosynthesis; gluconeogenesis. It participates in carbohydrate degradation; glycolysis; D-glyceraldehyde 3-phosphate from glycerone phosphate: step 1/1. Involved in the gluconeogenesis. Catalyzes stereospecifically the conversion of dihydroxyacetone phosphate (DHAP) to D-glyceraldehyde-3-phosphate (G3P). In Serratia proteamaculans (strain 568), this protein is Triosephosphate isomerase.